A 357-amino-acid polypeptide reads, in one-letter code: DNA primase small subunit PriS (357 aa).

Active-site residues include Asp105, Asp107, and Asp259.

This sequence belongs to the eukaryotic-type primase small subunit family. As to quaternary structure, heterodimer of a small subunit (PriS) and a large subunit (PriL). Mg(2+) is required as a cofactor. Mn(2+) serves as cofactor.

In terms of biological role, catalytic subunit of DNA primase, an RNA polymerase that catalyzes the synthesis of short RNA molecules used as primers for DNA polymerase during DNA replication. The small subunit contains the primase catalytic core and has DNA synthesis activity on its own. Binding to the large subunit stabilizes and modulates the activity, increasing the rate of DNA synthesis while decreasing the length of the DNA fragments, and conferring RNA synthesis capability. The DNA polymerase activity may enable DNA primase to also catalyze primer extension after primer synthesis. May also play a role in DNA repair. The chain is DNA primase small subunit PriS from Methanococcus maripaludis (strain C6 / ATCC BAA-1332).